The primary structure comprises 198 residues: Glycerol-3-phosphate acyltransferase (198 aa).

Transmembrane regions (helical) follow at residues Met-1 to Phe-21, His-77 to Leu-97, Met-111 to Leu-131, Ile-136 to Ile-156, and Gly-157 to Lys-177.

This sequence belongs to the PlsY family. Probably interacts with PlsX.

The protein localises to the cell inner membrane. It catalyses the reaction an acyl phosphate + sn-glycerol 3-phosphate = a 1-acyl-sn-glycero-3-phosphate + phosphate. It participates in lipid metabolism; phospholipid metabolism. Catalyzes the transfer of an acyl group from acyl-phosphate (acyl-PO(4)) to glycerol-3-phosphate (G3P) to form lysophosphatidic acid (LPA). This enzyme utilizes acyl-phosphate as fatty acyl donor, but not acyl-CoA or acyl-ACP. This chain is Glycerol-3-phosphate acyltransferase, found in Prochlorococcus marinus (strain MIT 9515).